A 124-amino-acid polypeptide reads, in one-letter code: Succinate dehydrogenase cytochrome b556 subunit (124 aa).

At 1–29 (MTKIKQEIYNKRPTSPHLTIYKPQISSTL) the chain is on the cytoplasmic side. The chain crosses the membrane as a helical span at residues 30 to 55 (SILHRMTGVALFFVVSILVWWLILSK). Residues 56–67 (YDNNYLQLASCC) are Periplasmic-facing. The helical transmembrane segment at 68 to 88 (IIKICLVAFSYSWCYHLCNGI) threads the bilayer. Heme is bound at residue H83. Over 89–103 (RHLFWDIGYGFSIKA) the chain is Cytoplasmic. A helical membrane pass occupies residues 104–124 (VNITGWCVVVCSILLTMLLWV).

The protein belongs to the cytochrome b560 family. Part of an enzyme complex containing four subunits: a flavoprotein, an iron-sulfur protein, plus two membrane-anchoring proteins, SdhC and SdhD. The complex can form homotrimers. Requires heme as cofactor.

It localises to the cell inner membrane. The protein operates within carbohydrate metabolism; tricarboxylic acid cycle. Membrane-anchoring subunit of succinate dehydrogenase (SDH). The protein is Succinate dehydrogenase cytochrome b556 subunit (sdhC) of Rickettsia prowazekii (strain Madrid E).